A 94-amino-acid polypeptide reads, in one-letter code: Small ribosomal subunit protein bS6 (94 aa).

This sequence belongs to the bacterial ribosomal protein bS6 family.

Functionally, binds together with bS18 to 16S ribosomal RNA. This is Small ribosomal subunit protein bS6 from Alkaliphilus metalliredigens (strain QYMF).